Reading from the N-terminus, the 943-residue chain is Sodium- and chloride-dependent GABA transporter ine (943 aa).

The Cytoplasmic portion of the chain corresponds to 1–345; the sequence is MAENKDVSQV…RQQHWANKMQ (345 aa). A disordered region spans residues 103 to 122; that stretch reads HKQSPLRHTSVRTRPSSEVL. 3 helical membrane-spanning segments follow: residues 346–366, 373–393, and 418–438; these read FVLA…FPYM, GVFL…LLFM, and GAGL…SVII. The Extracellular portion of the chain corresponds to 439-510; that stretch reads GYSIYYFFTS…GLEYPGMMRW (72 aa). Residue N476 is glycosylated (N-linked (GlcNAc...) asparagine). 9 consecutive transmembrane segments (helical) span residues 511-531, 539-559, 591-607, 618-638, 679-699, 723-743, 754-774, 799-819, and 836-856; these read ELFA…WKSI, YFTA…AVTL, FNSL…FASY, TVAV…FAFS, WAVM…FAIV, IVVL…IIQG, YAAS…IAWF, CWLV…LINY, and YGIG…YAVI. Over 857 to 943 the chain is Cytoplasmic; it reads NFLRSSGDTF…HAEAGGPCGQ (87 aa).

It belongs to the sodium:neurotransmitter symporter (SNF) (TC 2.A.22) family. As to expression, expressed both maternally and zygotically. Developing embryos exhibit expression in the posterior hindgut, foregut, midgut, Malpighian tubules, anal plate, Garland cells, and a subset of cells in the central nervous system. Central nervous system expression is seen in segmentally repeating in cells flanking the midline of the ventral ganglion. Isoform A and isoform B are colocalized in both the nervous system and the fluid reabsorption system.

Its subcellular location is the membrane. Its function is as follows. Plays a role in neuronal membrane excitation, important for normal response properties of the photoreceptor. Able to control excitability from either neurons or glia cells. Ine negatively regulates neuronal sodium channels. Controls neurotransmitter-mediated signaling pathways associated with the structure of the larval peripheral nerve, ine and eag control perineurial glial growth through partially redundant pathways. Isoform A and isoform B are both functional, although isoform A functions with greater efficiency. Has a role in osmolyte transport within the Malpighian tubule and hindgut. The protein is Sodium- and chloride-dependent GABA transporter ine of Drosophila melanogaster (Fruit fly).